We begin with the raw amino-acid sequence, 96 residues long: Large ribosomal subunit protein bL28 (96 aa).

The protein belongs to the bacterial ribosomal protein bL28 family.

The polypeptide is Large ribosomal subunit protein bL28 (Leptospira biflexa serovar Patoc (strain Patoc 1 / Ames)).